Consider the following 304-residue polypeptide: Ribonuclease BN (304 aa).

Residues H63, H65, D67, H68, H140, D211, and H269 each coordinate Zn(2+). D67 serves as the catalytic Proton acceptor.

Belongs to the RNase Z family. RNase BN subfamily. In terms of assembly, homodimer. It depends on Zn(2+) as a cofactor.

Its function is as follows. Zinc phosphodiesterase, which has both exoribonuclease and endoribonuclease activities. This Cronobacter sakazakii (strain ATCC BAA-894) (Enterobacter sakazakii) protein is Ribonuclease BN.